We begin with the raw amino-acid sequence, 478 residues long: Argininosuccinate lyase (478 aa).

The protein belongs to the lyase 1 family. Argininosuccinate lyase subfamily.

Its subcellular location is the cytoplasm. The catalysed reaction is 2-(N(omega)-L-arginino)succinate = fumarate + L-arginine. It participates in amino-acid biosynthesis; L-arginine biosynthesis; L-arginine from L-ornithine and carbamoyl phosphate: step 3/3. The sequence is that of Argininosuccinate lyase from Rhodospirillum rubrum (strain ATCC 11170 / ATH 1.1.1 / DSM 467 / LMG 4362 / NCIMB 8255 / S1).